A 433-amino-acid chain; its full sequence is Adenylosuccinate synthetase (433 aa).

GTP contacts are provided by residues 13–19 (GDEGKGK) and 41–43 (GHT). Residue D14 is the Proton acceptor of the active site. Positions 14 and 41 each coordinate Mg(2+). IMP contacts are provided by residues 14–17 (DEGK), 39–42 (NAGH), T130, R144, Q225, T240, and R304. Catalysis depends on H42, which acts as the Proton donor. 300–306 (STTGRKR) contacts substrate. GTP is bound by residues R306, 332-334 (KLD), and 414-416 (STG).

Belongs to the adenylosuccinate synthetase family. Homodimer. It depends on Mg(2+) as a cofactor.

The protein resides in the cytoplasm. It catalyses the reaction IMP + L-aspartate + GTP = N(6)-(1,2-dicarboxyethyl)-AMP + GDP + phosphate + 2 H(+). It participates in purine metabolism; AMP biosynthesis via de novo pathway; AMP from IMP: step 1/2. Functionally, plays an important role in the de novo pathway of purine nucleotide biosynthesis. Catalyzes the first committed step in the biosynthesis of AMP from IMP. This chain is Adenylosuccinate synthetase, found in Buchnera aphidicola subsp. Acyrthosiphon pisum (strain Tuc7).